We begin with the raw amino-acid sequence, 177 residues long: ATP synthase subunit delta (177 aa).

Belongs to the ATPase delta chain family. F-type ATPases have 2 components, F(1) - the catalytic core - and F(0) - the membrane proton channel. F(1) has five subunits: alpha(3), beta(3), gamma(1), delta(1), epsilon(1). F(0) has three main subunits: a(1), b(2) and c(10-14). The alpha and beta chains form an alternating ring which encloses part of the gamma chain. F(1) is attached to F(0) by a central stalk formed by the gamma and epsilon chains, while a peripheral stalk is formed by the delta and b chains.

The protein localises to the cell inner membrane. In terms of biological role, f(1)F(0) ATP synthase produces ATP from ADP in the presence of a proton or sodium gradient. F-type ATPases consist of two structural domains, F(1) containing the extramembraneous catalytic core and F(0) containing the membrane proton channel, linked together by a central stalk and a peripheral stalk. During catalysis, ATP synthesis in the catalytic domain of F(1) is coupled via a rotary mechanism of the central stalk subunits to proton translocation. Functionally, this protein is part of the stalk that links CF(0) to CF(1). It either transmits conformational changes from CF(0) to CF(1) or is implicated in proton conduction. In Vibrio alginolyticus, this protein is ATP synthase subunit delta.